Consider the following 175-residue polypeptide: Ribonuclease M5 (175 aa).

The Toprim domain occupies 3–83 (NEIIIVEGKS…DVDVFNAFVS (81 aa)). Mg(2+) contacts are provided by E9, D57, and D59.

The protein belongs to the ribonuclease M5 family. The cofactor is Mg(2+).

It localises to the cytoplasm. It carries out the reaction Endonucleolytic cleavage of RNA, removing 21 and 42 nucleotides, respectively, from the 5'- and 3'-termini of a 5S-rRNA precursor.. Functionally, required for correct processing of both the 5' and 3' ends of 5S rRNA precursor. Cleaves both sides of a double-stranded region yielding mature 5S rRNA in one step. In Mesoplasma florum (strain ATCC 33453 / NBRC 100688 / NCTC 11704 / L1) (Acholeplasma florum), this protein is Ribonuclease M5.